We begin with the raw amino-acid sequence, 1905 residues long: Transport and Golgi organization protein 1 homolog (1905 aa).

The signal sequence occupies residues M1–G22. The Lumenal segment spans residues Q23–N1141. The region spanning M45–E107 is the SH3 domain. Positions S154 to E167 are enriched in basic and acidic residues. 2 disordered regions span residues S154 to E259 and T313 to R621. An N-linked (GlcNAc...) asparagine glycan is attached at N173. Residues N173–E190 are compositionally biased toward acidic residues. Positions A198 to K208 are enriched in basic and acidic residues. The span at S209 to A220 shows a compositional bias: polar residues. A phosphoserine mark is found at S226 and S229. The span at L234–N245 shows a compositional bias: basic and acidic residues. N-linked (GlcNAc...) asparagine glycosylation occurs at N246. Residues N246 to S255 show a composition bias toward polar residues. Residues E317 to E327 are compositionally biased toward acidic residues. 2 stretches are compositionally biased toward basic and acidic residues: residues E337–E366 and K373–T386. Over residues M392–L414 the composition is skewed to acidic residues. Composition is skewed to basic and acidic residues over residues R419 to D436 and H459 to G480. Residues V467–A527 adopt a coiled-coil conformation. Positions D488 to L500 are enriched in polar residues. Residues I531 to S542 show a composition bias toward basic and acidic residues. N627 is a glycosylation site (N-linked (GlcNAc...) asparagine). Disordered stretches follow at residues Q657–P908, A1036–L1059, and P1085–D1118. The segment covering V669–N714 has biased composition (basic and acidic residues). Acidic residues predominate over residues P715–N730. Basic and acidic residues-rich tracts occupy residues Q736–V751, T766–T789, S842–P859, and P868–V884. Residue S873 is modified to Phosphoserine. The stretch at A1142–P1162 is an intramembrane region. Over D1163 to G1173 the chain is Lumenal. The chain crosses the membrane as a helical span at residues L1174 to F1194. The Cytoplasmic portion of the chain corresponds to W1195–P1905. Positions V1208–P1647 are mediates interaction with MIA2. A coiled-coil region spans residues Q1211 to T1393. The disordered stretch occupies residues S1416–K1443. At S1428 the chain carries Phosphoserine. A coiled-coil region spans residues N1484 to E1636. The disordered stretch occupies residues I1639–P1905. Residues P1647–F1664 are compositionally biased toward polar residues. Phosphoserine occurs at positions 1663, 1675, 1703, 1724, 1738, and 1742. A proline-rich domain (PRD); mediates interaction with the COPII coat subunits SEC23A and SEC23B region spans residues D1748–P1905. Residues L1776 to R1806 are compositionally biased toward pro residues. R1781 carries the asymmetric dimethylarginine modification. The segment at P1785–S1845 is SEC16A-interacting region (SIR); required for its localization to endoplasmic reticulum exit sites and for its interaction with SEC16A. The span at G1821 to E1831 shows a compositional bias: basic and acidic residues. S1890 and S1904 each carry phosphoserine. A compositionally biased stretch (polar residues) spans Q1891–P1905.

The protein belongs to the MIA/OTOR family. Tango1 subfamily. In terms of assembly, interacts with MIA2. Interacts (via SH3 domain) with COL7A1. Interacts with the COPII coat subunits SEC23A, SEC23B and maybe SEC24C. May interact with APOB and MIA2. Interacts with SEC16A.

The protein localises to the endoplasmic reticulum membrane. Plays a role in the transport of cargos that are too large to fit into COPII-coated vesicles and require specific mechanisms to be incorporated into membrane-bound carriers and exported from the endoplasmic reticulum. This protein is required for collagen VII (COL7A1) secretion by loading COL7A1 into transport carriers. It may participate in cargo loading of COL7A1 at endoplasmic reticulum exit sites by binding to COPII coat subunits Sec23/24 and guiding SH3-bound COL7A1 into a growing carrier. Does not play a role in global protein secretion and is apparently specific to COL7A1 cargo loading. However, it may participate in secretion of other proteins in cells that do not secrete COL7A1. It is also specifically required for the secretion of lipoproteins by participating in their export from the endoplasmic reticulum. Required for correct assembly of COPII coat components at endoplasmic reticulum exit sites (ERES) and for the localization of SEC16A and membrane-bound ER-resident complexes consisting of MIA2 and PREB/SEC12 to ERES. The polypeptide is Transport and Golgi organization protein 1 homolog (Bos taurus (Bovine)).